The sequence spans 424 residues: UPF0597 protein Shewana3_2972 (424 aa).

This sequence belongs to the UPF0597 family.

In Shewanella sp. (strain ANA-3), this protein is UPF0597 protein Shewana3_2972.